Consider the following 283-residue polypeptide: Peroxisomal protein 2 (283 aa).

Positions 281–283 (VKL) match the Peroxisomal target signal 1 (PTS1) motif.

It belongs to the PXP2 family.

The protein localises to the peroxisome matrix. Its subcellular location is the cytoplasm. The protein resides in the cytosol. In terms of biological role, probably involved in peroxisome formation or maintenance as well as in amino acid metabolism. The polypeptide is Peroxisomal protein 2 (Saccharomyces cerevisiae (strain ATCC 204508 / S288c) (Baker's yeast)).